We begin with the raw amino-acid sequence, 147 residues long: Transcriptional regulator MraZ (147 aa).

SpoVT-AbrB domains lie at 5–52 (SHAI…PETE) and 81–124 (ATTL…SEEA).

It belongs to the MraZ family. As to quaternary structure, forms oligomers.

The protein localises to the cytoplasm. Its subcellular location is the nucleoid. This chain is Transcriptional regulator MraZ, found in Saccharophagus degradans (strain 2-40 / ATCC 43961 / DSM 17024).